The following is a 351-amino-acid chain: Signal recognition particle receptor FtsY (351 aa).

GTP-binding positions include 152–159 (GVNGSGKT), 235–239 (DTAGR), and 299–302 (TKMD).

Belongs to the GTP-binding SRP family. FtsY subfamily. Part of the signal recognition particle protein translocation system, which is composed of SRP and FtsY.

Its subcellular location is the cell membrane. The protein resides in the cytoplasm. The enzyme catalyses GTP + H2O = GDP + phosphate + H(+). Involved in targeting and insertion of nascent membrane proteins into the cytoplasmic membrane. Acts as a receptor for the complex formed by the signal recognition particle (SRP) and the ribosome-nascent chain (RNC). This Metamycoplasma hominis (strain ATCC 23114 / DSM 25592 / NBRC 14850 / NCTC 10111 / PG21) (Mycoplasma hominis) protein is Signal recognition particle receptor FtsY.